A 361-amino-acid polypeptide reads, in one-letter code: Small ribosomal subunit protein mS46 (361 aa).

A mitochondrion-targeting transit peptide spans 1–14 (MRSSMFRCVSRAHY). A disordered region spans residues 37 to 99 (ASSNALKLDK…SDSVRANKQQ (63 aa)). Positions 43–52 (KLDKMKEGRM) are enriched in basic and acidic residues. The segment covering 59 to 68 (GNQNRNSMNN) has biased composition (low complexity). A compositionally biased stretch (basic and acidic residues) spans 69-91 (KESRGREGNQGERNMRLKNRSSD).

Belongs to the mitochondrion-specific ribosomal protein mS46 family. Component of the mitochondrial small ribosomal subunit (mt-SSU). Mature yeast 74S mitochondrial ribosomes consist of a small (37S) and a large (54S) subunit. The 37S small subunit contains a 15S ribosomal RNA (15S mt-rRNA) and 34 different proteins. The 54S large subunit contains a 21S rRNA (21S mt-rRNA) and 46 different proteins.

The protein resides in the mitochondrion. In terms of biological role, component of the mitochondrial ribosome (mitoribosome), a dedicated translation machinery responsible for the synthesis of mitochondrial genome-encoded proteins, including at least some of the essential transmembrane subunits of the mitochondrial respiratory chain. The mitoribosomes are attached to the mitochondrial inner membrane and translation products are cotranslationally integrated into the membrane. The polypeptide is Small ribosomal subunit protein mS46 (RSM28) (Saccharomyces cerevisiae (strain ATCC 204508 / S288c) (Baker's yeast)).